We begin with the raw amino-acid sequence, 353 residues long: Inositol 3-kinase (353 aa).

Residues Ser197, 247–250 (GAGD), and Asn274 contribute to the ATP site. Asp250 (proton acceptor) is an active-site residue.

This sequence belongs to the carbohydrate kinase pfkB family.

It catalyses the reaction myo-inositol + ATP = 1D-myo-inositol 3-phosphate + ADP + H(+). Functionally, kinase that phosphorylates myo-inositol to produce multiple myo-inositol monophosphates. Participates in phytic acid biosynthesis in developing seeds. Phytic acid is the primary storage form of phosphorus in cereal grains and other plant seeds. This is Inositol 3-kinase from Arabidopsis thaliana (Mouse-ear cress).